The primary structure comprises 310 residues: Ribose-phosphate pyrophosphokinase (310 aa).

ATP-binding positions include Asp-34–Glu-36 and Arg-93–Gln-94. Residues His-127 and Asp-167 each contribute to the Mg(2+) site. Residue Lys-190 is part of the active site. D-ribose 5-phosphate-binding positions include Arg-192, Asp-216, and Asp-220–Thr-224.

The protein belongs to the ribose-phosphate pyrophosphokinase family. Class I subfamily. Homohexamer. Requires Mg(2+) as cofactor.

It localises to the cytoplasm. The catalysed reaction is D-ribose 5-phosphate + ATP = 5-phospho-alpha-D-ribose 1-diphosphate + AMP + H(+). Its pathway is metabolic intermediate biosynthesis; 5-phospho-alpha-D-ribose 1-diphosphate biosynthesis; 5-phospho-alpha-D-ribose 1-diphosphate from D-ribose 5-phosphate (route I): step 1/1. Its function is as follows. Involved in the biosynthesis of the central metabolite phospho-alpha-D-ribosyl-1-pyrophosphate (PRPP) via the transfer of pyrophosphoryl group from ATP to 1-hydroxyl of ribose-5-phosphate (Rib-5-P). The sequence is that of Ribose-phosphate pyrophosphokinase from Maricaulis maris (strain MCS10) (Caulobacter maris).